The sequence spans 407 residues: 4-hydroxy-3-methylbut-2-en-1-yl diphosphate synthase (flavodoxin) (407 aa).

Residues C296, C299, C342, and E349 each coordinate [4Fe-4S] cluster.

This sequence belongs to the IspG family. Requires [4Fe-4S] cluster as cofactor.

It carries out the reaction (2E)-4-hydroxy-3-methylbut-2-enyl diphosphate + oxidized [flavodoxin] + H2O + 2 H(+) = 2-C-methyl-D-erythritol 2,4-cyclic diphosphate + reduced [flavodoxin]. It participates in isoprenoid biosynthesis; isopentenyl diphosphate biosynthesis via DXP pathway; isopentenyl diphosphate from 1-deoxy-D-xylulose 5-phosphate: step 5/6. Functionally, converts 2C-methyl-D-erythritol 2,4-cyclodiphosphate (ME-2,4cPP) into 1-hydroxy-2-methyl-2-(E)-butenyl 4-diphosphate. This Methylococcus capsulatus (strain ATCC 33009 / NCIMB 11132 / Bath) protein is 4-hydroxy-3-methylbut-2-en-1-yl diphosphate synthase (flavodoxin).